A 229-amino-acid polypeptide reads, in one-letter code: Nectarin-1 (229 aa).

Positions methionine 1–alanine 32 are cleaved as a signal peptide. Cysteines 42 and 57 form a disulfide. Asparagine 60 is a glycosylation site (N-linked (GlcNAc...) asparagine). The Cupin type-1 domain maps to leucine 69–glutamine 217. Mn(2+)-binding residues include histidine 117, histidine 119, glutamate 124, and histidine 163.

As to quaternary structure, monomer. In the absence of manganese, it forms tetrameric and pentameric forms which show superoxide dismutase activity. Mn(2+) serves as cofactor. Nectary tissues and to a lower level ovary. Not detected in petals, stems, leaves, roots or other floral tissues.

Its subcellular location is the secreted. It is found in the extracellular space. It localises to the apoplast. It catalyses the reaction 2 superoxide + 2 H(+) = H2O2 + O2. In terms of biological role, may interact with bacterial adhesins thereby protecting the reproductive tissues from microbial attack. Has no oxalate oxidase activity. In Nicotiana langsdorffii x Nicotiana sanderae (Ornamental tobacco), this protein is Nectarin-1 (NECI).